The chain runs to 365 residues: Probable L-tyrosine/L-aspartate decarboxylase (365 aa).

Residue lysine 224 is modified to N6-(pyridoxal phosphate)lysine.

Belongs to the group II decarboxylase family. MfnA subfamily. It depends on pyridoxal 5'-phosphate as a cofactor.

The catalysed reaction is L-tyrosine + H(+) = tyramine + CO2. The enzyme catalyses L-aspartate + H(+) = beta-alanine + CO2. It participates in cofactor biosynthesis; methanofuran biosynthesis. It functions in the pathway cofactor biosynthesis; coenzyme A biosynthesis. Functionally, catalyzes the decarboxylation of L-tyrosine to produce tyramine for methanofuran biosynthesis. Can also catalyze the decarboxylation of L-aspartate to produce beta-alanine for coenzyme A (CoA) biosynthesis. The polypeptide is Probable L-tyrosine/L-aspartate decarboxylase (Methanoregula boonei (strain DSM 21154 / JCM 14090 / 6A8)).